A 417-amino-acid polypeptide reads, in one-letter code: NADH-quinone oxidoreductase subunit D (417 aa).

The protein belongs to the complex I 49 kDa subunit family. In terms of assembly, NDH-1 is composed of 14 different subunits. Subunits NuoB, C, D, E, F, and G constitute the peripheral sector of the complex.

It localises to the cell inner membrane. The catalysed reaction is a quinone + NADH + 5 H(+)(in) = a quinol + NAD(+) + 4 H(+)(out). Its function is as follows. NDH-1 shuttles electrons from NADH, via FMN and iron-sulfur (Fe-S) centers, to quinones in the respiratory chain. The immediate electron acceptor for the enzyme in this species is believed to be ubiquinone. Couples the redox reaction to proton translocation (for every two electrons transferred, four hydrogen ions are translocated across the cytoplasmic membrane), and thus conserves the redox energy in a proton gradient. The polypeptide is NADH-quinone oxidoreductase subunit D (Nitrosomonas eutropha (strain DSM 101675 / C91 / Nm57)).